Consider the following 71-residue polypeptide: Small ribosomal subunit protein bS21 (71 aa).

Residues 48–59 (AKASAVKRHAKK) are compositionally biased toward basic residues. Residues 48-71 (AKASAVKRHAKKLSRENARRIRLY) form a disordered region. Positions 60-71 (LSRENARRIRLY) are enriched in basic and acidic residues.

This sequence belongs to the bacterial ribosomal protein bS21 family.

This Aeromonas hydrophila subsp. hydrophila (strain ATCC 7966 / DSM 30187 / BCRC 13018 / CCUG 14551 / JCM 1027 / KCTC 2358 / NCIMB 9240 / NCTC 8049) protein is Small ribosomal subunit protein bS21.